A 475-amino-acid chain; its full sequence is Lactate utilization protein B (475 aa).

2 4Fe-4S ferredoxin-type domains span residues 304–334 (GTEF…GHSY) and 353–382 (YEDH…LHEL). Cys313, Cys316, Cys319, Cys323, Cys366, Cys369, and Cys373 together coordinate [4Fe-4S] cluster.

Belongs to the LutB/YkgF family.

Is involved in L-lactate degradation and allows cells to grow with lactate as the sole carbon source. Has probably a role as an electron transporter during oxidation of L-lactate. The polypeptide is Lactate utilization protein B (Shouchella clausii (strain KSM-K16) (Alkalihalobacillus clausii)).